We begin with the raw amino-acid sequence, 61 residues long: Large ribosomal subunit protein eL24 (61 aa).

Zn(2+)-binding residues include C7, C10, C33, and C37. Residues 7–37 (CTYCGRSIEPGTGLMYVKNDGSVLWFCSSKC) form a C4-type zinc finger.

This sequence belongs to the eukaryotic ribosomal protein eL24 family. In terms of assembly, part of the 50S ribosomal subunit. Forms a cluster with proteins L3 and L14. It depends on Zn(2+) as a cofactor.

Binds to the 23S rRNA. In Hyperthermus butylicus (strain DSM 5456 / JCM 9403 / PLM1-5), this protein is Large ribosomal subunit protein eL24.